Consider the following 1189-residue polypeptide: Disabled homolog 2-interacting protein (1189 aa).

A disordered region spans residues Met1 to Val75. The span at Leu20–Arg38 shows a compositional bias: basic residues. Basic and acidic residues predominate over residues Pro39–Gly49. The PH domain maps to Ser101–His202. Residues Trp193–Tyr311 enclose the C2 domain. Residues Gly387–Ile595 enclose the Ras-GAP domain. The necessary for interaction with AKT1 stretch occupies residues Leu646–Leu943. Residues Leu653–Ala668 are compositionally biased toward polar residues. Disordered regions lie at residues Leu653 to Ile678 and Arg715 to Gly742. Over residues Ser669–Ile678 the composition is skewed to low complexity. The segment covering Arg715–Glu731 has biased composition (polar residues). The residue at position 728 (Ser728) is a Phosphoserine; by MAP3K5 and RIPK1. A Phosphoserine modification is found at Ser747. Disordered stretches follow at residues Ala803–Leu823, Pro843–Glu865, Ser895–Ala998, Glu1015–Leu1035, and Arg1164–Cys1189. The segment covering Glu852–Glu865 has biased composition (low complexity). Over residues Gln919–Pro931 the composition is skewed to pro residues. 2 stretches are compositionally biased toward polar residues: residues Asn938 to Ser955 and Arg966 to Gly976. 2 positions are modified to phosphoserine: Ser978 and Ser995. Basic and acidic residues predominate over residues Pro1023–Leu1035. Positions Arg1026 to Tyr1159 form a coiled coil.

On plasma membrane, exists in an inactive form complexed with TNFR1; in response to TNF-alpha, dissociates from TNFR1 complex, translocates to cytoplasm and forms part of an intracellular signaling complex comprising TRADD, RIPK1, TRAF2 and MAP3K5. Interacts with DAB1. Interacts (via NPXY motif) with DAB2 (via PID domain). Interacts (via PH domain) with ERN1. Part of a cytoplasmic complex made of HIPK1, DAB2IP and MAP3K5 in response to TNF-alpha; this complex formation promotes MAP3K5-JNK activation and subsequent apoptosis. Interacts (via N-terminal domain) with JAK2; the interaction occurs in a IFNG/IFN-gamma-dependent manner and inhibits JAK2 autophosphorylation activity. Interacts (via C2 domain) with GSK3B; the interaction stimulates GSK3B kinase activation. Interacts (via C2 domain) with PPP2CA. Interacts (via proline-rich motif) with a regulatory p85 subunit (via SH3 domain) of the PI3K complex; the interaction inhibits the PI3K-AKT complex activity in a TNF-alpha-dependent manner in prostate cancer (PCa) cells. Interacts with AKT1; the interaction is increased in a TNF-alpha-induced manner. Interacts (via C2 domain and active form preferentially) with KDR/VEGFR2 (tyrosine-phosphorylated active form preferentially); the interaction occurs at the late phase of VEGFA response and inhibits KDR/VEGFR2 activity. Interacts (via N-terminus C2 domain) with MAP3K5 ('Ser-966' dephosphorylated form preferentially); the interaction occurs in a TNF-alpha-induced manner. Interacts (via Ras-GAP domain) with the catalytic subunit of protein phosphatase PP2A; the interaction occurs in resting endothelial cells, is further enhanced by TNF-alpha stimulation and is required to bridge PP2A to MAP3K5. Interacts (via C-terminus PER domain) with TRAF2 (via zinc fingers); the interaction occurs in a TNF-alpha-dependent manner. Interacts with 14-3-3 proteins; the interaction occurs in a TNF-alpha-dependent manner. Interacts (via Ras-GAP domain) with RIPK1 (via kinase domain); the interaction occurs in a TNF-alpha-dependent manner. Interacts with RAB40C; acts as a GAP for RAB40C. Post-translationally, in response to TNF-alpha-induction, phosphorylated at Ser-728; phosphorylation leads to a conformational change, and thus, increases its association with 14-3-3 proteins, MAP3K5, RIPK1 and TRAF2 in endothelial cells; also stimulates regulatory p85 subunit sequestring and PI3K-p85 complex activity inhibition. In terms of tissue distribution, expressed in endothelial and vascular smooth muscle cells (VSMCs). Expressed in prostate epithelial but poorly in prostate cancer cells. Poorly expressed in medulloblastoma cells compared to cerebellar precursor proliferating progenitor cells (at protein level). Low expression in prostate. Down-regulated in prostate cancer.

It localises to the cytoplasm. The protein resides in the cell membrane. It is found in the membrane. Its subcellular location is the cell projection. The protein localises to the dendrite. In terms of biological role, functions as a scaffold protein implicated in the regulation of a large spectrum of both general and specialized signaling pathways. Involved in several processes such as innate immune response, inflammation and cell growth inhibition, apoptosis, cell survival, angiogenesis, cell migration and maturation. Also plays a role in cell cycle checkpoint control; reduces G1 phase cyclin levels resulting in G0/G1 cell cycle arrest. Mediates signal transduction by receptor-mediated inflammatory signals, such as the tumor necrosis factor (TNF), interferon (IFN) or lipopolysaccharide (LPS). Modulates the balance between phosphatidylinositol 3-kinase (PI3K)-AKT-mediated cell survival and apoptosis stimulated kinase (MAP3K5)-JNK signaling pathways; sequesters both AKT1 and MAP3K5 and counterbalances the activity of each kinase by modulating their phosphorylation status in response to pro-inflammatory stimuli. Acts as a regulator of the endoplasmic reticulum (ER) unfolded protein response (UPR) pathway; specifically involved in transduction of the ER stress-response to the JNK cascade through ERN1. Mediates TNF-alpha-induced apoptosis activation by facilitating dissociation of inhibitor 14-3-3 from MAP3K5; recruits the PP2A phosphatase complex which dephosphorylates MAP3K5 on 'Ser-966', leading to the dissociation of 13-3-3 proteins and activation of the MAP3K5-JNK signaling pathway in endothelial cells. Also mediates TNF/TRAF2-induced MAP3K5-JNK activation, while it inhibits CHUK-NF-kappa-B signaling. Acts a negative regulator in the IFN-gamma-mediated JAK-STAT signaling cascade by inhibiting smooth muscle cell (VSMCs) proliferation and intimal expansion, and thus, prevents graft arteriosclerosis (GA). Acts as a GTPase-activating protein (GAP) for the ADP ribosylation factor 6 (ARF6), Ras and RAB40C. Promotes hydrolysis of the ARF6-bound GTP and thus, negatively regulates phosphatidylinositol 4,5-bisphosphate (PIP2)-dependent TLR4-TIRAP-MyD88 and NF-kappa-B signaling pathways in endothelial cells in response to lipopolysaccharides (LPS). Binds specifically to phosphatidylinositol 4-phosphate (PtdIns4P) and phosphatidylinositol 3-phosphate (PtdIns3P). In response to vascular endothelial growth factor (VEGFA), acts as a negative regulator of the VEGFR2-PI3K-mediated angiogenic signaling pathway by inhibiting endothelial cell migration and tube formation. In the developing brain, promotes both the transition from the multipolar to the bipolar stage and the radial migration of cortical neurons from the ventricular zone toward the superficial layer of the neocortex in a glial-dependent locomotion process. Probable downstream effector of the Reelin signaling pathway; promotes Purkinje cell (PC) dendrites development and formation of cerebellar synapses. Also functions as a tumor suppressor protein in prostate cancer progression; prevents cell proliferation and epithelial-to-mesenchymal transition (EMT) through activation of the glycogen synthase kinase-3 beta (GSK3B)-induced beta-catenin and inhibition of PI3K-AKT and Ras-MAPK survival downstream signaling cascades, respectively. The chain is Disabled homolog 2-interacting protein from Homo sapiens (Human).